The sequence spans 481 residues: 2-succinylbenzoate--CoA ligase (481 aa).

It belongs to the ATP-dependent AMP-binding enzyme family. MenE subfamily.

The catalysed reaction is 2-succinylbenzoate + ATP + CoA = 2-succinylbenzoyl-CoA + AMP + diphosphate. The protein operates within quinol/quinone metabolism; 1,4-dihydroxy-2-naphthoate biosynthesis; 1,4-dihydroxy-2-naphthoate from chorismate: step 5/7. It functions in the pathway quinol/quinone metabolism; menaquinone biosynthesis. Its function is as follows. Converts 2-succinylbenzoate (OSB) to 2-succinylbenzoyl-CoA (OSB-CoA). This chain is 2-succinylbenzoate--CoA ligase, found in Bacillus mycoides (strain KBAB4) (Bacillus weihenstephanensis).